We begin with the raw amino-acid sequence, 428 residues long: Tol-Pal system protein TolB (428 aa).

Residues 1–23 (MRRLYQTVCTLALLLVGLQAAHA) form the signal peptide.

The protein belongs to the TolB family. In terms of assembly, the Tol-Pal system is composed of five core proteins: the inner membrane proteins TolA, TolQ and TolR, the periplasmic protein TolB and the outer membrane protein Pal. They form a network linking the inner and outer membranes and the peptidoglycan layer.

The protein resides in the periplasm. Its function is as follows. Part of the Tol-Pal system, which plays a role in outer membrane invagination during cell division and is important for maintaining outer membrane integrity. This is Tol-Pal system protein TolB from Alkalilimnicola ehrlichii (strain ATCC BAA-1101 / DSM 17681 / MLHE-1).